A 266-amino-acid polypeptide reads, in one-letter code: Large ribosomal subunit protein eL8 (266 aa).

Residues lysine 11, lysine 20, and lysine 21 each participate in a glycyl lysine isopeptide (Lys-Gly) (interchain with G-Cter in SUMO2) cross-link. Lysine 34 carries the post-translational modification N6-acetyllysine. Lysine 48 is covalently cross-linked (Glycyl lysine isopeptide (Lys-Gly) (interchain with G-Cter in SUMO2)). Position 97 is an N6-acetyllysine; alternate (lysine 97). Lysine 97 participates in a covalent cross-link: Glycyl lysine isopeptide (Lys-Gly) (interchain with G-Cter in SUMO2); alternate. Lysine 125 is covalently cross-linked (Glycyl lysine isopeptide (Lys-Gly) (interchain with G-Cter in SUMO2)). An N6-acetyllysine modification is found at lysine 217. Lysine 245 participates in a covalent cross-link: Glycyl lysine isopeptide (Lys-Gly) (interchain with G-Cter in SUMO2).

The protein belongs to the eukaryotic ribosomal protein eL8 family. In terms of assembly, component of the large ribosomal subunit. Interacts with CRY1. Interacts with DICER1, AGO2, TARBP2, MOV10 and EIF6; they form a large RNA-induced silencing complex (RISC).

The protein resides in the cytoplasm. In terms of biological role, component of the large ribosomal subunit. The ribosome is a large ribonucleoprotein complex responsible for the synthesis of proteins in the cell. The protein is Large ribosomal subunit protein eL8 (RPL7A) of Bos taurus (Bovine).